Here is a 742-residue protein sequence, read N- to C-terminus: Photosystem I P700 chlorophyll a apoprotein A2 2 (742 aa).

8 helical membrane-spanning segments follow: residues 46-69, 135-158, 175-199, 273-291, 334-357, 373-399, 421-443, and 524-542; these read IFATHFGHVAIIFLWASSLLFHVA, LYQGSVFLLLLAALFLFAGWLHLQ, LNHHLAGLFGVSSLAWAGHLIHVAI, MAHHHLAIAVIFIIAGHMY, LHFQLSIHLAALGTALSLVAQHMY, AALYTHHQYIAGFLMIGAFAHAGIFWI, AIISHLSWVSLFLGFHTLGIYVH, and FLVHHAIALGLHTTTLICV. Residues C566 and C575 each contribute to the [4Fe-4S] cluster site. The next 2 helical transmembrane spans lie at 583–604 and 651–673; these read SFYLALFWMLNLLGWVTFYWHW and LSVWAWMFLFGHLVWATGFMFLI. Chlorophyll a-binding residues include H662, M670, and Y678. Phylloquinone is bound at residue W679. The chain crosses the membrane as a helical span at residues 715–735; the sequence is LVGLAHFTVGYILTYAAFLIA.

It belongs to the PsaA/PsaB family. The PsaA/B heterodimer binds the P700 chlorophyll special pair and subsequent electron acceptors. PSI consists of a core antenna complex that captures photons, and an electron transfer chain that converts photonic excitation into a charge separation. The cyanobacterial PSI reaction center is composed of one copy each of PsaA,B,C,D,E,F,I,J,K,L,M and X, and forms trimeric complexes. Requires PSI electron transfer chain: 5 chlorophyll a, 1 chlorophyll a', 2 phylloquinones and 3 4Fe-4S clusters. PSI core antenna: 90 chlorophyll a, 22 carotenoids, 3 phospholipids and 1 galactolipid. P700 is a chlorophyll a/chlorophyll a' dimer, A0 is one or more chlorophyll a, A1 is one or both phylloquinones and FX is a shared 4Fe-4S iron-sulfur center. as cofactor.

It localises to the cellular thylakoid membrane. It catalyses the reaction reduced [plastocyanin] + hnu + oxidized [2Fe-2S]-[ferredoxin] = oxidized [plastocyanin] + reduced [2Fe-2S]-[ferredoxin]. PsaA and PsaB bind P700, the primary electron donor of photosystem I (PSI), as well as the electron acceptors A0, A1 and FX. PSI is a plastocyanin/cytochrome c6-ferredoxin oxidoreductase, converting photonic excitation into a charge separation, which transfers an electron from the donor P700 chlorophyll pair to the spectroscopically characterized acceptors A0, A1, FX, FA and FB in turn. Oxidized P700 is reduced on the lumenal side of the thylakoid membrane by plastocyanin or cytochrome c6. The protein is Photosystem I P700 chlorophyll a apoprotein A2 2 (psaB2) of Nostoc sp. (strain PCC 7120 / SAG 25.82 / UTEX 2576).